Reading from the N-terminus, the 259-residue chain is Phosphate import ATP-binding protein PstB (259 aa).

In terms of domain architecture, ABC transporter spans Ile5–Gln248. Residue Gly37–Ser44 participates in ATP binding.

The protein belongs to the ABC transporter superfamily. Phosphate importer (TC 3.A.1.7) family. In terms of assembly, the complex is composed of two ATP-binding proteins (PstB), two transmembrane proteins (PstC and PstA) and a solute-binding protein (PstS).

Its subcellular location is the cell membrane. It carries out the reaction phosphate(out) + ATP + H2O = ADP + 2 phosphate(in) + H(+). Functionally, part of the ABC transporter complex PstSACB involved in phosphate import. Responsible for energy coupling to the transport system. This is Phosphate import ATP-binding protein PstB from Leifsonia xyli subsp. xyli (strain CTCB07).